We begin with the raw amino-acid sequence, 357 residues long: 4-hydroxymandelate oxidase (357 aa).

One can recognise an FMN hydroxy acid dehydrogenase domain in the interval 1–357 (MTYVSLADLE…RRLNTKLGVV (357 aa)). Gln-126 provides a ligand contact to FMN. Tyr-128 is an a 2-oxocarboxylate binding site. Thr-154 contributes to the FMN binding site. Arg-163 provides a ligand contact to a 2-oxocarboxylate. Position 228 (Lys-228) interacts with FMN. His-252 acts as the Proton acceptor in catalysis. A 2-oxocarboxylate is bound at residue Arg-255. FMN is bound by residues 283–287 (DGGIR) and 306–307 (GR).

The protein belongs to the FMN-dependent alpha-hydroxy acid dehydrogenase family. FMN serves as cofactor.

It catalyses the reaction (S)-4-hydroxymandelate + O2 = 4-hydroxyphenylglyoxylate + H2O2. It functions in the pathway antibiotic biosynthesis; vancomycin biosynthesis. Catalyzes the oxidation of p-hydroxymandelate to p-hydroxybenzoylformate in the biosynthesis of L-(4-hydroxyphenyl)glycine and L-(3,5-dihydroxyphenyl)glycine, 2 non-proteinogenic amino acids occurring in the vancomycin group of antibiotics. This Amycolatopsis orientalis (Nocardia orientalis) protein is 4-hydroxymandelate oxidase (hmo).